The chain runs to 548 residues: Membrane protein insertase YidC (548 aa).

The chain crosses the membrane as a helical span at residues 6 to 26 (NLLVIALLFVSFMIWQAWEQD). The disordered stretch occupies residues 28–54 (NPQPQTQQTTQTTTTAAGSAADQGVPA). A compositionally biased stretch (low complexity) spans 29-42 (PQPQTQQTTQTTTT). The next 4 helical transmembrane spans lie at 350–370 (FVGNWGFSIIIITFIVRGIMY), 424–444 (FPLIIQMPIFLALYYMLMGSI), 458–478 (LSAQDPYYILPILMGVTMFFI), and 499–519 (PVIFTVFFLWFPSGLVLYYIV).

It belongs to the OXA1/ALB3/YidC family. Type 1 subfamily. In terms of assembly, interacts with the Sec translocase complex via SecD. Specifically interacts with transmembrane segments of nascent integral membrane proteins during membrane integration.

It is found in the cell inner membrane. Its function is as follows. Required for the insertion and/or proper folding and/or complex formation of integral membrane proteins into the membrane. Involved in integration of membrane proteins that insert both dependently and independently of the Sec translocase complex, as well as at least some lipoproteins. Aids folding of multispanning membrane proteins. This chain is Membrane protein insertase YidC, found in Salmonella arizonae (strain ATCC BAA-731 / CDC346-86 / RSK2980).